We begin with the raw amino-acid sequence, 88 residues long: MGCCGCGGCGGCGGCGGGCGGGCGRCTTCRCYRVGCCSSCCPCCRGCCGGCCSTPVICCCRRTCSSCGYSCGKGCCQQKCCCQKQCCC.

The tract at residues 4–72 (CGCGGCGGCG…TCSSCGYSCG (69 aa)) is 10 X 2 AA repeats of CG.

This sequence belongs to the KRTAP type 28 family.

Its function is as follows. In the hair cortex, hair keratin intermediate filaments are embedded in an interfilamentous matrix, consisting of hair keratin-associated proteins (KRTAP), which are essential for the formation of a rigid and resistant hair shaft through their extensive disulfide bond cross-linking with abundant cysteine residues of hair keratins. The matrix proteins include the high-sulfur and high-glycine-tyrosine keratins. This chain is Small cysteine and glycine repeat-containing protein 1, found in Homo sapiens (Human).